Here is a 117-residue protein sequence, read N- to C-terminus: MDKKAARIRRATRARRKLQELGATRLVVHRTPRHIYAQVIAPNGSEVLVAASTVEKAIAEQLKSTGNKDAASAIGKAIAERALEKGIKDVSFDRSGFQYHGRVQALADAAREAGLQF.

Belongs to the universal ribosomal protein uL18 family. Part of the 50S ribosomal subunit; part of the 5S rRNA/L5/L18/L25 subcomplex. Contacts the 5S and 23S rRNAs.

In terms of biological role, this is one of the proteins that bind and probably mediate the attachment of the 5S RNA into the large ribosomal subunit, where it forms part of the central protuberance. The polypeptide is Large ribosomal subunit protein uL18 (Pectobacterium carotovorum subsp. carotovorum (strain PC1)).